A 537-amino-acid chain; its full sequence is Glutamyl-tRNA reductase, chloroplastic (537 aa).

The N-terminal 48 residues, 1-48, are a transit peptide targeting the chloroplast; it reads MMASTTSATAAGGAFAAAKTRAGSSAAGGGACARVAAGGRRRSGVVVR. Substrate-binding positions include 134 to 137, Ser194, 199 to 201, and Gln205; these read TCNR and EGQ. Catalysis depends on Cys135, which acts as the Nucleophile. An NADP(+)-binding site is contributed by 276–281; sequence GAGKMG.

This sequence belongs to the glutamyl-tRNA reductase family.

It is found in the plastid. The protein resides in the chloroplast. It catalyses the reaction (S)-4-amino-5-oxopentanoate + tRNA(Glu) + NADP(+) = L-glutamyl-tRNA(Glu) + NADPH + H(+). The protein operates within porphyrin-containing compound metabolism; protoporphyrin-IX biosynthesis; 5-aminolevulinate from L-glutamyl-tRNA(Glu): step 1/2. Its function is as follows. Catalyzes the NADPH-dependent reduction of glutamyl-tRNA(Glu) to glutamate 1-semialdehyde (GSA). This chain is Glutamyl-tRNA reductase, chloroplastic, found in Oryza sativa subsp. japonica (Rice).